Reading from the N-terminus, the 153-residue chain is Pheromone-binding protein Gp-9 (153 aa).

The first 19 residues, methionine 1–alanine 19, serve as a signal peptide directing secretion. 3 disulfide bridges follow: cysteine 37–cysteine 77, cysteine 73–cysteine 129, and cysteine 118–cysteine 138.

Belongs to the PBP/GOBP family. In terms of assembly, homodimer.

The protein localises to the secreted. In terms of biological role, colony queen number, a major feature of social organization, is associated with worker genotype for Gp-9. Colonies are headed by either a single reproductive queen (monogyne form) or multiple queens (polygyne form). Differences in worker Gp-9 genotypes between social forms may cause differences in workers' abilities to recognize queens and regulate their numbers. The sequence is that of Pheromone-binding protein Gp-9 from Solenopsis richteri (Black imported fire ant).